A 271-amino-acid chain; its full sequence is Calretinin (271 aa).

EF-hand domains lie at Leu16–Ala51, Asn63–Phe98, Gly107–Lys142, Lys151–Phe186, Leu195–Lys230, and Met235–Pro270. Positions 29, 31, 33, 35, 40, 76, 78, 80, 82, 87, 120, 122, 124, 126, 131, 164, 166, 168, 170, 175, 208, 210, 212, 214, and 219 each coordinate Ca(2+). Tyr214 is modified (phosphotyrosine).

It belongs to the calbindin family.

The protein localises to the synapse. Its subcellular location is the cell projection. The protein resides in the dendrite. Calcium-binding protein involved in calcium homeostasis and signal transduction. It plays a critical role in buffering intracellular calcium levels and modulating calcium-dependent signaling pathways. Predominantly expressed in specific neuronal populations, influences synaptic plasticity and neuronal excitability, contributing to learning and memory. During embryonic development, it facilitates neuronal differentiation and maturation. This Rattus norvegicus (Rat) protein is Calretinin (Calb2).